The following is a 512-amino-acid chain: uncharacterized protein (512 aa).

2 consecutive transmembrane segments (helical) span residues 20 to 40 and 222 to 242; these read IFPV…IYIW and GIAL…FGYI. In terms of domain architecture, Histidine kinase spans 297–512; the sequence is EQLIQSIEQT…TLMCYQIPLV (216 aa). H325 carries the post-translational modification Phosphohistidine; by autocatalysis.

In terms of processing, autophosphorylated.

The protein resides in the cell membrane. It carries out the reaction ATP + protein L-histidine = ADP + protein N-phospho-L-histidine.. Its function is as follows. Probable member of the two-component regulatory system SE_0166/SE_0165. May activate SE_0165 by phosphorylation. This is an uncharacterized protein from Staphylococcus epidermidis (strain ATCC 12228 / FDA PCI 1200).